The chain runs to 283 residues: MDLLLILKAVIMGIVEGITEFLPISSTGYLILSADLMSFWTKEKADLFIVVIQLGAILAVIYEYWGRLWHALMGLITGKSEGPNALKNPRQLGLSLIVATIPVMLVGFTLADQIKEYLFNPYTVAIMLILGGLLIFYVERKQIPVIAEEAEDVSLKTALLIGLMQCLALIPGTSRSGSTIIGALWLGVSRKAAAEFSFFLGIPVIIGAGLLDLLKHKDVLSSGQDWLILGVGVLVSFVVGLLCIRWLVDWVSRRDFTIFAWLRIITGIIVLLVAWIFGYTIQG.

Helical transmembrane passes span 4–24 (LLILKAVIMGIVEGITEFLPI), 45–65 (ADLFIVVIQLGAILAVIYEYW), 91–111 (QLGLSLIVATIPVMLVGFTLA), 118–138 (LFNPYTVAIMLILGGLLIFYV), 153–173 (VSLKTALLIGLMQCLALIPGT), 194–214 (AEFSFFLGIPVIIGAGLLDLL), 228–248 (ILGVGVLVSFVVGLLCIRWLV), and 258–278 (IFAWLRIITGIIVLLVAWIFG).

The protein belongs to the UppP family.

The protein resides in the cell inner membrane. The catalysed reaction is di-trans,octa-cis-undecaprenyl diphosphate + H2O = di-trans,octa-cis-undecaprenyl phosphate + phosphate + H(+). Catalyzes the dephosphorylation of undecaprenyl diphosphate (UPP). Confers resistance to bacitracin. This is Undecaprenyl-diphosphatase from Psychrobacter sp. (strain PRwf-1).